The following is a 1039-amino-acid chain: Probable inorganic carbon transporter subunit DabA 2 (1039 aa).

Zn(2+) is bound by residues Cys462, Asp464, His721, and Cys736.

Belongs to the inorganic carbon transporter (TC 9.A.2) DabA family. As to quaternary structure, forms a complex with DabB. It depends on Zn(2+) as a cofactor.

The protein resides in the cell inner membrane. Functionally, part of an energy-coupled inorganic carbon pump. This is Probable inorganic carbon transporter subunit DabA 2 from Nitrobacter hamburgensis (strain DSM 10229 / NCIMB 13809 / X14).